The sequence spans 214 residues: Large ribosomal subunit protein uL16 (214 aa).

A Citrulline modification is found at R32. Residue K175 forms a Glycyl lysine isopeptide (Lys-Gly) (interchain with G-Cter in SUMO2) linkage. Residue K188 forms a Glycyl lysine isopeptide (Lys-Gly) (interchain with G-Cter in ubiquitin) linkage.

This sequence belongs to the universal ribosomal protein uL16 family. In terms of assembly, component of the large ribosomal subunit. Mature ribosomes consist of a small (40S) and a large (60S) subunit. The 40S subunit contains about 33 different proteins and 1 molecule of RNA (18S). The 60S subunit contains about 49 different proteins and 3 molecules of RNA (28S, 5.8S and 5S). In terms of processing, citrullinated by PADI4. Post-translationally, ufmylated by UFL1.

The protein resides in the cytoplasm. Functionally, component of the large ribosomal subunit. Plays a role in the formation of actively translating ribosomes. May play a role in the embryonic brain development. The polypeptide is Large ribosomal subunit protein uL16 (Rattus norvegicus (Rat)).